The following is a 159-amino-acid chain: uncharacterized protein (159 aa).

This is an uncharacterized protein from Bacillus subtilis (strain 168).